Here is a 256-residue protein sequence, read N- to C-terminus: Sorbitol dehydrogenase (256 aa).

NAD(+) contacts are provided by residues 15 to 17, Asp-36, 59 to 60, Asn-86, Tyr-152, Lys-156, and 182 to 187; these read RGI, DV, and PGVVDG. Tyr-152 acts as the Proton acceptor in catalysis.

Belongs to the short-chain dehydrogenases/reductases (SDR) family. As to quaternary structure, homodimer. May function as a tetramer in vivo.

It catalyses the reaction keto-D-fructose + NADH + H(+) = D-sorbitol + NAD(+). The catalysed reaction is galactitol + NAD(+) = keto-D-tagatose + NADH + H(+). It carries out the reaction L-iditol + NAD(+) = keto-L-sorbose + NADH + H(+). With respect to regulation, inhibited by DTT, N-bromosuccinimide and iodoacetic acid. Catalyzes the oxidation of D-sorbitol (D-glucitol) to D-fructose. Can also catalyze the oxidation of galactitol to D-tagatose and the oxidation of L-iditol, with lower efficiency. The protein is Sorbitol dehydrogenase (polS) of Cereibacter sphaeroides (Rhodobacter sphaeroides).